Here is a 376-residue protein sequence, read N- to C-terminus: Delta(12) fatty acid desaturase fat-2 (376 aa).

The next 4 membrane-spanning stretches (helical) occupy residues 45 to 65 (ISYL…VPYI), 69 to 89 (LGWI…SALF), 203 to 223 (VKCA…FVLC), and 228 to 248 (YTFV…LVII).

Belongs to the fatty acid desaturase type 1 family.

The protein resides in the membrane. The catalysed reaction is (9Z)-octadecenoyl-CoA + 2 Fe(II)-[cytochrome b5] + O2 + 2 H(+) = (9Z,12Z)-octadecadienoyl-CoA + 2 Fe(III)-[cytochrome b5] + 2 H2O. It catalyses the reaction (9Z)-hexadecenoyl-CoA + 2 Fe(II)-[cytochrome b5] + O2 + 2 H(+) = (9Z,12Z)-hexadecadienoyl-CoA + 2 Fe(III)-[cytochrome b5] + 2 H2O. It carries out the reaction (9Z,12Z)-octadecadienoyl-CoA + 2 Fe(II)-[cytochrome b5] + O2 + 2 H(+) = (9Z,12Z,15Z)-octadecatrienoyl-CoA + 2 Fe(III)-[cytochrome b5] + 2 H2O. The enzyme catalyses (9Z)-heptadecenoyl-CoA + 2 Fe(II)-[cytochrome b5] + O2 + 2 H(+) = (9Z,12Z)-heptadecadienoyl-CoA + 2 Fe(III)-[cytochrome b5] + 2 H2O. The catalysed reaction is (9Z)-pentadecenoyl-CoA + 2 Fe(II)-[cytochrome b5] + O2 + 2 H(+) = (9Z,12Z)-pentadecadienoyl-CoA + 2 Fe(III)-[cytochrome b5] + 2 H2O. It catalyses the reaction (6Z,9Z,12Z)-octadecatrienoyl-CoA + 2 Fe(II)-[cytochrome b5] + O2 + 2 H(+) = (6Z,9Z,12Z,15Z)-octadecatetraenoyl-CoA + 2 Fe(III)-[cytochrome b5] + 2 H2O. It carries out the reaction (9Z)-tetradecenoyl-CoA + 2 Fe(II)-[cytochrome b5] + O2 + 2 H(+) = (9Z,12Z)-tetradecadienoyl-CoA + 2 Fe(III)-[cytochrome b5] + 2 H2O. It functions in the pathway lipid metabolism; polyunsaturated fatty acid biosynthesis. Its function is as follows. Can function as a Delta(12)/Delta(15) bifunctional desaturase and behaves as a nu +3' desaturase. Introduces a double bond in the fatty acid chain three carbons away from an existing double bond to biosynthesize polyunsaturated fatty acids (PUFAs) endogenously (PUFAs are essential for membrane structure and many cellular and physiological processes). Acts on a number of substrates like oleoyl-CoA ((9Z)-octadecenoyl-CoA, 18:1n-9), palmitoleoyl-CoA ((9Z)-hexadecenoyl-CoA, 16:1n-7), and gamma-linolenoyl-CoA ((6Z,9Z,12Z)-octadecatrienoyl-CoA, 18:3n-6), to generate linoleoyl-CoA ((9Z,12Z)-octadecadienoyl-CoA, 18:2n-6), (9Z,12Z)-hexadecadienoyl-CoA (16:2n-4) and (6Z,9Z,12Z,15Z)-octadecatetraenoyl-CoA (18:4n-3) respectively. Unlike plants, Caenorhabditis elegans desaturases seem to use fatty acyl-CoAs as substrates. The protein is Delta(12) fatty acid desaturase fat-2 (fat-2) of Caenorhabditis elegans.